Consider the following 339-residue polypeptide: DNA-directed RNA polymerase subunit alpha (339 aa).

The alpha N-terminal domain (alpha-NTD) stretch occupies residues 1–233 (MVREEVAGST…DLFLPFLHAE (233 aa)). Residues 264-339 (KKGIPLNCIF…IDLLKNKLSF (76 aa)) are alpha C-terminal domain (alpha-CTD).

This sequence belongs to the RNA polymerase alpha chain family. In terms of assembly, in plastids the minimal PEP RNA polymerase catalytic core is composed of four subunits: alpha, beta, beta', and beta''. When a (nuclear-encoded) sigma factor is associated with the core the holoenzyme is formed, which can initiate transcription.

The protein resides in the plastid. It localises to the chloroplast. It catalyses the reaction RNA(n) + a ribonucleoside 5'-triphosphate = RNA(n+1) + diphosphate. Functionally, DNA-dependent RNA polymerase catalyzes the transcription of DNA into RNA using the four ribonucleoside triphosphates as substrates. The sequence is that of DNA-directed RNA polymerase subunit alpha from Thinopyrum elongatum (Tall wheatgrass).